Here is a 261-residue protein sequence, read N- to C-terminus: MSDILDRIIAVKRDEVAAAMRSTPLEALKLEASARDLRDFVGALRAKQAAGQPAVIAEVKKASPSKGVLREHFVPADIARSYATHGAACLSVLTDEQFFQGSVRYLEEARAACTLPVLRKDFIVDAYQILEARAMGADAILLIAAALDTPLMQELEAYAHSLGLAVLVEVHDRNEMEQALTLKTPLVGINNRNLRTFETTIQTTLDMLDMVPADRMVVTESGILSRADVDTMRAANVNAFLVGEAFMRADEPGAALARMFF.

It belongs to the TrpC family.

It carries out the reaction 1-(2-carboxyphenylamino)-1-deoxy-D-ribulose 5-phosphate + H(+) = (1S,2R)-1-C-(indol-3-yl)glycerol 3-phosphate + CO2 + H2O. Its pathway is amino-acid biosynthesis; L-tryptophan biosynthesis; L-tryptophan from chorismate: step 4/5. The sequence is that of Indole-3-glycerol phosphate synthase from Burkholderia vietnamiensis (strain G4 / LMG 22486) (Burkholderia cepacia (strain R1808)).